Consider the following 276-residue polypeptide: MDRLHTSSADWPDHLATQVVRVRGGVLQAAGQSDHVAEETPVALEFNGISHATMLVTPTHLDDFALGFALTEGIVGGMADVRGVELETRCDGIVVQVEIATSCEVRLKERRRAMAGRTGCGLCGVETLPEVVRDVAPAADSDALPVHNVLRAMQSLRSRQTLHDATGATHAAGWADASGEVVLAREDVGRHNALDKLIGALARQGIAPLPGMAVVSSRASFEMVQKTASAGIPILAAVSAPTALAIRLARQTNVTLLGFVRNTDATIYSHPQRIAA.

Cysteine 120 acts as the Cysteine persulfide intermediate in catalysis.

The protein belongs to the FdhD family.

Its subcellular location is the cytoplasm. Required for formate dehydrogenase (FDH) activity. Acts as a sulfur carrier protein that transfers sulfur from IscS to the molybdenum cofactor prior to its insertion into FDH. The protein is Sulfur carrier protein FdhD of Bordetella parapertussis (strain 12822 / ATCC BAA-587 / NCTC 13253).